The sequence spans 495 residues: Lysine--tRNA ligase (495 aa).

Positions 406 and 413 each coordinate Mg(2+).

Belongs to the class-II aminoacyl-tRNA synthetase family. As to quaternary structure, homodimer. Mg(2+) serves as cofactor.

It localises to the cytoplasm. The catalysed reaction is tRNA(Lys) + L-lysine + ATP = L-lysyl-tRNA(Lys) + AMP + diphosphate. The sequence is that of Lysine--tRNA ligase from Staphylococcus aureus (strain MW2).